The primary structure comprises 563 residues: BOS complex subunit NCLN (563 aa).

An N-terminal signal peptide occupies residues 1 to 42 (MLEEAGEVLENVLKASCLPLGFIVFLPAVLLLVAPPLPAADA). The Lumenal segment spans residues 43-522 (AHEFTVYRMQ…VMNAYRVKPA (480 aa)). N241 and N428 each carry an N-linked (GlcNAc...) asparagine glycan. A helical membrane pass occupies residues 523-543 (IFDLLLALCIGAYLGMAYTAV). The Cytoplasmic portion of the chain corresponds to 544–563 (QHFHVLYKTVQRLLLKAKAQ).

Belongs to the nicastrin family. Component of the back of Sec61 (BOS) complex, composed of NCLN/Nicalin, NOMO1 and TMEM147. The BOS complex is part of the multi-pass translocon (MPT) complex, composed of three subcomplexes, the GEL complex (composed of RAB5IF/OPTI and TMCO1), the BOS complex (composed of NCLN/Nicalin, NOMO1 and TMEM147) and the PAT complex (composed of WDR83OS/Asterix and CCDC47). The MPT complex associates with the SEC61 complex.

It is found in the endoplasmic reticulum membrane. Its function is as follows. Component of the multi-pass translocon (MPT) complex that mediates insertion of multi-pass membrane proteins into the lipid bilayer of membranes. The MPT complex takes over after the SEC61 complex: following membrane insertion of the first few transmembrane segments of proteins by the SEC61 complex, the MPT complex occludes the lateral gate of the SEC61 complex to promote insertion of subsequent transmembrane regions. May antagonize Nodal signaling and subsequent organization of axial structures during mesodermal patterning, via its interaction with NOMO. The polypeptide is BOS complex subunit NCLN (Ncln) (Rattus norvegicus (Rat)).